A 152-amino-acid chain; its full sequence is Xanthine-guanine phosphoribosyltransferase (152 aa).

Residues 37–38, arginine 69, and 88–96 contribute to the 5-phospho-alpha-D-ribose 1-diphosphate site; these read RG and DDLVDSGDT. Arginine 69 contributes to the GMP binding site. Mg(2+) is bound at residue aspartate 89. Residues aspartate 92 and isoleucine 135 each contribute to the guanine site. Positions 92 and 135 each coordinate xanthine. Residues 92-96 and 134-135 contribute to the GMP site; these read DSGDT and WI.

The protein belongs to the purine/pyrimidine phosphoribosyltransferase family. XGPT subfamily. As to quaternary structure, homotetramer. It depends on Mg(2+) as a cofactor.

Its subcellular location is the cell inner membrane. It catalyses the reaction GMP + diphosphate = guanine + 5-phospho-alpha-D-ribose 1-diphosphate. The catalysed reaction is XMP + diphosphate = xanthine + 5-phospho-alpha-D-ribose 1-diphosphate. It carries out the reaction IMP + diphosphate = hypoxanthine + 5-phospho-alpha-D-ribose 1-diphosphate. The protein operates within purine metabolism; GMP biosynthesis via salvage pathway; GMP from guanine: step 1/1. It functions in the pathway purine metabolism; XMP biosynthesis via salvage pathway; XMP from xanthine: step 1/1. Purine salvage pathway enzyme that catalyzes the transfer of the ribosyl-5-phosphate group from 5-phospho-alpha-D-ribose 1-diphosphate (PRPP) to the N9 position of the 6-oxopurines guanine and xanthine to form the corresponding ribonucleotides GMP (guanosine 5'-monophosphate) and XMP (xanthosine 5'-monophosphate), with the release of PPi. To a lesser extent, also acts on hypoxanthine. The sequence is that of Xanthine-guanine phosphoribosyltransferase from Aliivibrio fischeri (strain ATCC 700601 / ES114) (Vibrio fischeri).